Here is a 408-residue protein sequence, read N- to C-terminus: MVQINGSYLKLKAGYLFPEISRRVNDFSTANPKADLIRLGIGDVTEPLPKACCNAMQLAIEEMSTEAGFHGYGPEQGYSWLREAIAKFAYQARNCEITPEEIFVSDGSKCDSSNILDILGDNNRIAVTDPVYPVYVDSNVMVGRTGLAEKSGRYQGLSYIPMNAENGFEAEIPSEHFDLIYLCFPNNPTGSVATKEQLMRWVEYAKNHDALILFDAAYEAFIQDPELPHSIYEIDGARDCAIEFRSFSKNAGFTGTRCAFTVIPKCLRGRSPSNDEVDLWSLWNRRQSTKFNGVSYIVQRGAEAVYSPEGQSQVSDLISFYMDNAQIIRSQLSSIGLQVYGGQNAPYAWIKTPEGMDSWAFFDYLLQKANVVGTPGSGFGSSGEGYFRLSAFNSRNKVNEAMRRITSI.

Positions 15 and 42 each coordinate substrate. Pyridoxal 5'-phosphate-binding positions include Y72, 108–109 (SK), Y132, N187, Y218, and 246–248 (SFS). K109, Y132, and N187 together coordinate substrate. K249 is subject to N6-(pyridoxal phosphate)lysine. Pyridoxal 5'-phosphate contacts are provided by R257 and N292. 2 residues coordinate substrate: N292 and R388.

It belongs to the class-I pyridoxal-phosphate-dependent aminotransferase family. LL-diaminopimelate aminotransferase subfamily. In terms of assembly, homodimer. The cofactor is pyridoxal 5'-phosphate.

The enzyme catalyses (2S,6S)-2,6-diaminopimelate + 2-oxoglutarate = (S)-2,3,4,5-tetrahydrodipicolinate + L-glutamate + H2O + H(+). It functions in the pathway amino-acid biosynthesis; L-lysine biosynthesis via DAP pathway; LL-2,6-diaminopimelate from (S)-tetrahydrodipicolinate (aminotransferase route): step 1/1. Its function is as follows. Involved in the synthesis of meso-diaminopimelate (m-DAP or DL-DAP), required for both lysine and peptidoglycan biosynthesis. Catalyzes the direct conversion of tetrahydrodipicolinate to LL-diaminopimelate. This Prochlorococcus marinus (strain MIT 9211) protein is LL-diaminopimelate aminotransferase.